We begin with the raw amino-acid sequence, 404 residues long: CCA-adding enzyme (404 aa).

Positions 27 and 30 each coordinate ATP. Residues G27 and R30 each coordinate CTP. The Mg(2+) site is built by D40 and D42. R111, D154, R157, R160, and R163 together coordinate ATP. The CTP site is built by R111, D154, R157, R160, and R163.

Belongs to the tRNA nucleotidyltransferase/poly(A) polymerase family. Bacterial CCA-adding enzyme type 3 subfamily. As to quaternary structure, homodimer. The cofactor is Mg(2+).

The enzyme catalyses a tRNA precursor + 2 CTP + ATP = a tRNA with a 3' CCA end + 3 diphosphate. The catalysed reaction is a tRNA with a 3' CCA end + 2 CTP + ATP = a tRNA with a 3' CCACCA end + 3 diphosphate. Catalyzes the addition and repair of the essential 3'-terminal CCA sequence in tRNAs without using a nucleic acid template. Adds these three nucleotides in the order of C, C, and A to the tRNA nucleotide-73, using CTP and ATP as substrates and producing inorganic pyrophosphate. tRNA 3'-terminal CCA addition is required both for tRNA processing and repair. Also involved in tRNA surveillance by mediating tandem CCA addition to generate a CCACCA at the 3' terminus of unstable tRNAs. While stable tRNAs receive only 3'-terminal CCA, unstable tRNAs are marked with CCACCA and rapidly degraded. The structural flexibility of RNA controls the choice between CCA versus CCACCA addition: following the first CCA addition cycle, nucleotide-binding to the active site triggers a clockwise screw motion, producing torque on the RNA. This ejects stable RNAs, whereas unstable RNAs are refolded while bound to the enzyme and subjected to a second CCA catalytic cycle. The protein is CCA-adding enzyme of Geobacillus stearothermophilus (Bacillus stearothermophilus).